The primary structure comprises 601 residues: Glutathione-regulated potassium-efflux system protein KefB (601 aa).

13 consecutive transmembrane segments (helical) span residues 4–24 (SDFL…VPLA), 29–49 (IGAV…GLGF), 55–75 (EILH…GLEL), 87–107 (IFGV…GLLM), 115–135 (AAVV…LQLM), 152–172 (VLLF…LLAG), 177–197 (HFDW…LIGG), 207–227 (FIAA…LVLG), 230–250 (LFMD…GVLL), 268–288 (GLLL…GVLY), 291–311 (LLWV…VLYL), 324–344 (MQFA…FSTA), and 356–376 (ALLL…MKLV). The RCK N-terminal domain occupies 400 to 519 (KPQVIVVGFG…AGVTQFSRET (120 aa)).

Belongs to the monovalent cation:proton antiporter 2 (CPA2) transporter (TC 2.A.37) family. KefB subfamily. Interacts with the regulatory subunit KefG.

The protein localises to the cell inner membrane. Functionally, pore-forming subunit of a potassium efflux system that confers protection against electrophiles. Catalyzes K(+)/H(+) antiport. The sequence is that of Glutathione-regulated potassium-efflux system protein KefB from Shigella sonnei (strain Ss046).